The primary structure comprises 468 residues: MSQGKIVQIIGAVVDVEFQRNEVPKVYHALKVEGTAITLEVQQQLGDGVVRTIALGSTDGLKRNLLATNTERAISVPVGAGTLGRIMDVLGRPIDEAGDVQASDHWEIHRAAPSYEDQSSSTELLETGIKVIDLMCPFAKGGKVGLFGGAGVGKTVNMMELINNIAKAHSGLSVFAGVGERTREGNDFYHEMKDSNVLDKVAMVYGQMNEPPGNRLRVALTGLTMAEYFRDEKDENGKGKDVLLFVDNIYRYTLAGTEVSALLGRMPSAVGYQPTLAEEMGVLQERITSTKSGSITSIQAVYVPADDLTDPSPATTFAHLDSTVTLSRNIASLGIYPAVDPLDSTSRQMDPLVIGHEHYDTAQRVQQTLQKYKELKDIIAILGMDELSEEDKQSVSRARKIERFFSQPFHVAEVFTGSPGKYVSLKDTIRGFKAICDGEYDHLPEQAFYMVGSIEEAVEKANKMSAKA.

Glycine 148–threonine 155 is a binding site for ATP.

Belongs to the ATPase alpha/beta chains family. F-type ATPases have 2 components, CF(1) - the catalytic core - and CF(0) - the membrane proton channel. CF(1) has five subunits: alpha(3), beta(3), gamma(1), delta(1), epsilon(1). CF(0) has three main subunits: a(1), b(2) and c(9-12). The alpha and beta chains form an alternating ring which encloses part of the gamma chain. CF(1) is attached to CF(0) by a central stalk formed by the gamma and epsilon chains, while a peripheral stalk is formed by the delta and b chains.

Its subcellular location is the cell inner membrane. The catalysed reaction is ATP + H2O + 4 H(+)(in) = ADP + phosphate + 5 H(+)(out). Produces ATP from ADP in the presence of a proton gradient across the membrane. The catalytic sites are hosted primarily by the beta subunits. This is ATP synthase subunit beta from Xanthomonas campestris pv. campestris (strain 8004).